The chain runs to 113 residues: Inner membrane protein YiaB (113 aa).

Over 1-9 the chain is Cytoplasmic; the sequence is MKTSKTVAK. The helical transmembrane segment at 10-20 threads the bilayer; the sequence is LLFVVGALVYL. Residues 21–33 lie on the Periplasmic side of the membrane; it reads VGLWISCPLLSGK. Residues 34 to 51 form a helical membrane-spanning segment; it reads GYFLGVLMTATFGNYAYL. Topologically, residues 52–61 are cytoplasmic; it reads RAEKLGQLDD. A helical transmembrane segment spans residues 62-82; sequence FFTHICQLVALITIGLLFIGV. Topologically, residues 83-84 are periplasmic; sequence LN. The chain crosses the membrane as a helical span at residues 85–105; sequence APINTYEMVIYPIAFFVCLFG. The Cytoplasmic segment spans residues 106 to 113; that stretch reads QMRLFRSA.

It localises to the cell inner membrane. In Escherichia coli (strain K12), this protein is Inner membrane protein YiaB (yiaB).